A 212-amino-acid polypeptide reads, in one-letter code: MIGMDHFEREAYEDGYRVIAGVDEAGRGPLAGPVVAAAVILPHGYSHPEITDSKKLSAGKREKLYEVIKRDALAIGVGVVESPVIDQVNILRATLRAMAEAVDDLSIRPDFLLVDGLHRIFLNISQKTIVKGDTLSVSIASASIIAKVSRDRIMEIYHRQFPQYNFLKNKGYGTREHREAIQNFGFCKIHRRSFKVKSTKPQSLQTVNLFDF.

Residues 17–206 (RVIAGVDEAG…KSTKPQSLQT (190 aa)) form the RNase H type-2 domain. The a divalent metal cation site is built by Asp-23, Glu-24, and Asp-115.

It belongs to the RNase HII family. Mn(2+) is required as a cofactor. The cofactor is Mg(2+).

It localises to the cytoplasm. The catalysed reaction is Endonucleolytic cleavage to 5'-phosphomonoester.. Endonuclease that specifically degrades the RNA of RNA-DNA hybrids. The chain is Ribonuclease HII from Syntrophus aciditrophicus (strain SB).